The primary structure comprises 208 residues: Protein JLP2 (208 aa).

Residues 185–194 (AKKNQKKKNK) show a composition bias toward basic residues. Residues 185 to 208 (AKKNQKKKNKQSKDEVTDDMQLEV) are disordered.

It belongs to the CCDC25 family.

Its subcellular location is the cytoplasm. The protein is Protein JLP2 (JLP2) of Saccharomyces cerevisiae (strain ATCC 204508 / S288c) (Baker's yeast).